A 205-amino-acid polypeptide reads, in one-letter code: Large ribosomal subunit protein bL25 (205 aa).

This sequence belongs to the bacterial ribosomal protein bL25 family. CTC subfamily. Part of the 50S ribosomal subunit; part of the 5S rRNA/L5/L18/L25 subcomplex. Contacts the 5S rRNA. Binds to the 5S rRNA independently of L5 and L18.

In terms of biological role, this is one of the proteins that binds to the 5S RNA in the ribosome where it forms part of the central protuberance. This is Large ribosomal subunit protein bL25 from Stutzerimonas stutzeri (strain A1501) (Pseudomonas stutzeri).